The chain runs to 414 residues: Serine/threonine transporter SstT (414 aa).

Residues 2-15 (TTQHSPGLFRRLAH) are Cytoplasmic-facing. The chain crosses the membrane as a helical span at residues 16–36 (GSLVKQILAGLILGILLAWIS). Over 37-45 (KPAAEAVGL) the chain is Periplasmic. Residues 46-66 (LGTLFVGALKAVAPILVLMLV) form a helical membrane-spanning segment. At 67–83 (MASIANHQHGQKTNIRP) the chain is on the cytoplasmic side. Residues 84-104 (ILFLYLLGTFSAALAAVIFSF) traverse the membrane as a helical segment. Residues 105 to 142 (AFPSTLHLSSSAGDISPPSGIVEVMRGLVMSMVSNPID) are Periplasmic-facing. A helical membrane pass occupies residues 143–163 (ALLKGNYIGILVWAIGLGFAL). The Cytoplasmic segment spans residues 164-179 (RHGNETTKNLVNDMSN). A helical transmembrane segment spans residues 180 to 200 (AVTFMVKLVIHFAPIGIFGLV). The Periplasmic segment spans residues 201–217 (SSTLATTGFSTLWGYAQ). Residues 218-238 (LLVVLVGCMLLVALVVNPLLV) form a helical membrane-spanning segment. At 239 to 299 (WWKIRRNPFP…VSIPLGATIN (61 aa)) the chain is on the cytoplasmic side. Residues 300–320 (MAGAAITITVLTLAAVNTLGI) traverse the membrane as a helical segment. The Periplasmic segment spans residues 321 to 331 (PVDLPTALLLS). Residues 332-352 (VVASLCACGASGVAGGSLLLI) traverse the membrane as a helical segment. Topologically, residues 353 to 414 (PLACNMFGIS…DRLANSALRN (62 aa)) are cytoplasmic.

Belongs to the dicarboxylate/amino acid:cation symporter (DAACS) (TC 2.A.23) family.

Its subcellular location is the cell inner membrane. The catalysed reaction is L-serine(in) + Na(+)(in) = L-serine(out) + Na(+)(out). The enzyme catalyses L-threonine(in) + Na(+)(in) = L-threonine(out) + Na(+)(out). Involved in the import of serine and threonine into the cell, with the concomitant import of sodium (symport system). In Escherichia coli (strain UTI89 / UPEC), this protein is Serine/threonine transporter SstT.